A 348-amino-acid chain; its full sequence is A-type ATP synthase subunit C (348 aa).

It belongs to the V-ATPase V0D/AC39 subunit family. In terms of assembly, has multiple subunits with at least A(3), B(3), C, D, E, F, H, I and proteolipid K(x).

The protein localises to the cell membrane. Functionally, component of the A-type ATP synthase that produces ATP from ADP in the presence of a proton gradient across the membrane. The polypeptide is A-type ATP synthase subunit C (Haloferax volcanii (strain ATCC 29605 / DSM 3757 / JCM 8879 / NBRC 14742 / NCIMB 2012 / VKM B-1768 / DS2) (Halobacterium volcanii)).